The following is a 736-amino-acid chain: 3',5'-cyclic-AMP phosphodiesterase 4B (736 aa).

Disordered stretches follow at residues 51–77 (QLPP…PTTL) and 96–116 (DVEN…SSSS). Ser56 carries the post-translational modification Phosphoserine. At Ser290 the chain carries Phosphoserine. In terms of domain architecture, PDEase spans 330–659 (VNTENEDHLA…NWYQSMIPQS (330 aa)). The active-site Proton donor is the His406. Residue His406 coordinates 3',5'-cyclic AMP. Residues His406 and His410 each coordinate AMP. 4 residues coordinate Zn(2+): His410, His446, Asp447, and Asp564. 4 residues coordinate AMP: Asp447, Asp564, Gln615, and Phe618. Position 447 (Asp447) interacts with Mg(2+). Asp447 lines the Mn(2+) pocket. 2 residues coordinate 3',5'-cyclic AMP: Gln615 and Phe618. A phosphoserine mark is found at Ser659 and Ser661. A disordered region spans residues 685-736 (EEEDSEGPEKEGEGPNYFSSTKTLCVIDPENRDSLEETDIDIATEDKSLIDT).

The protein belongs to the cyclic nucleotide phosphodiesterase family. PDE4 subfamily. In terms of assembly, interacts with DISC1. Requires Zn(2+) as cofactor. The cofactor is Mg(2+). It depends on Mn(2+) as a cofactor. In terms of tissue distribution, widely expressed. As to expression, expressed in brain, heart, lung and liver. Expressed in liver and brain.

It localises to the cytoplasm. The protein localises to the cell membrane. It carries out the reaction 3',5'-cyclic AMP + H2O = AMP + H(+). Its pathway is purine metabolism; 3',5'-cyclic AMP degradation; AMP from 3',5'-cyclic AMP: step 1/1. Its activity is regulated as follows. Inhibited by rolipram. Its function is as follows. Hydrolyzes the second messenger cAMP, which is a key regulator of many important physiological processes. The protein is 3',5'-cyclic-AMP phosphodiesterase 4B of Rattus norvegicus (Rat).